Reading from the N-terminus, the 431-residue chain is 5-methylthioadenosine/S-adenosylhomocysteine deaminase (431 aa).

Zn(2+) is bound by residues histidine 66 and histidine 68. Residues glutamate 95, arginine 147, and histidine 185 each coordinate substrate. Histidine 212 is a Zn(2+) binding site. The substrate site is built by glutamate 215 and aspartate 300. Zn(2+) is bound at residue aspartate 300.

It belongs to the metallo-dependent hydrolases superfamily. MTA/SAH deaminase family. The cofactor is Zn(2+).

It catalyses the reaction S-adenosyl-L-homocysteine + H2O + H(+) = S-inosyl-L-homocysteine + NH4(+). The catalysed reaction is S-methyl-5'-thioadenosine + H2O + H(+) = S-methyl-5'-thioinosine + NH4(+). In terms of biological role, catalyzes the deamination of 5-methylthioadenosine and S-adenosyl-L-homocysteine into 5-methylthioinosine and S-inosyl-L-homocysteine, respectively. Is also able to deaminate adenosine. In Acetivibrio thermocellus (strain ATCC 27405 / DSM 1237 / JCM 9322 / NBRC 103400 / NCIMB 10682 / NRRL B-4536 / VPI 7372) (Clostridium thermocellum), this protein is 5-methylthioadenosine/S-adenosylhomocysteine deaminase.